The primary structure comprises 334 residues: Putative B3 domain-containing protein At3g49610 (334 aa).

Disordered regions lie at residues 69–89 (ERRT…GSEK) and 133–178 (DEFE…KFDP). Polar residues-rich tracts occupy residues 73 to 84 (LGSSPTKTNTLF) and 141 to 157 (KSPT…SCLM). The segment covering 161-173 (KRKRYQSSGKSKK) has biased composition (basic residues). The segment at residues 229 to 334 (FNKLLRNDFL…GVLCFALEKE (106 aa)) is a DNA-binding region (TF-B3).

It localises to the nucleus. This is Putative B3 domain-containing protein At3g49610 from Arabidopsis thaliana (Mouse-ear cress).